We begin with the raw amino-acid sequence, 276 residues long: Alpha N-terminal protein methyltransferase 1 (276 aa).

A disordered region spans residues 1–57 (MTTTLEEQLSDKLQMMDETTDKVQGSSKQKDDSSIAASSDAKTASPSSSDSSTKVAA). Residues 34–57 (SIAASSDAKTASPSSSDSSTKVAA) are compositionally biased toward low complexity. S-adenosyl-L-methionine contacts are provided by residues Gly114, Arg119, 136-138 (EQD), 167-168 (LQ), and Gln182.

The protein belongs to the methyltransferase superfamily. NTM1 family.

The catalysed reaction is N-terminal L-alanyl-L-prolyl-L-lysyl-[protein] + 3 S-adenosyl-L-methionine = N-terminal N,N,N-trimethyl-L-alanyl-L-prolyl-L-lysyl-[protein] + 3 S-adenosyl-L-homocysteine + 3 H(+). The enzyme catalyses N-terminal L-seryl-L-prolyl-L-lysyl-[protein] + 3 S-adenosyl-L-methionine = N-terminal N,N,N-trimethyl-L-seryl-L-prolyl-L-lysyl-[protein] + 3 S-adenosyl-L-homocysteine + 3 H(+). It carries out the reaction N-terminal L-prolyl-L-prolyl-L-lysyl-[protein] + 2 S-adenosyl-L-methionine = N-terminal N,N-dimethyl-L-prolyl-L-prolyl-L-lysyl-[protein] + 2 S-adenosyl-L-homocysteine + 2 H(+). Functionally, alpha-N-methyltransferase that methylates the N-terminus of target proteins containing the N-terminal motif [Ala/Pro/Ser]-Pro-Lys when the initiator Met is cleaved. Specifically catalyzes mono-, di- or tri-methylation of exposed alpha-amino group of Ala or Ser residue in the [Ala/Ser]-Pro-Lys motif and mono- or di-methylation of Pro in the Pro-Pro-Lys motif. The protein is Alpha N-terminal protein methyltransferase 1 (Ntmt) of Drosophila melanogaster (Fruit fly).